Reading from the N-terminus, the 257-residue chain is MLTLYGREVSSRLLLGTARYPSPAVLADAVRASNTDILTISLRREMAGAKKGGQFFELIRELDRHILPNTAGCHTAKEAVLTAKMAREVFRTDWIKLEVIGHHDTLQPDVFALVEAAKILCDEGFEVFPYTTDDLVVAEKLLEAGCRVLMPWCAPIGSAMGPLNLTALKSMRARFPEVPLIVDAGIGRPSHAVTVMELGYDAVLLNTAVAGAGDPVGMAEAFARAIEAGHQAYLSGPLEPRDMAVPSTPVIGTAVFS.

Lysine 96 serves as the catalytic Schiff-base intermediate with DXP. Residues glycine 157, 184–185 (AG), and 206–207 (NT) contribute to the 1-deoxy-D-xylulose 5-phosphate site.

This sequence belongs to the ThiG family. In terms of assembly, homotetramer. Forms heterodimers with either ThiH or ThiS.

The protein resides in the cytoplasm. It carries out the reaction [ThiS sulfur-carrier protein]-C-terminal-Gly-aminoethanethioate + 2-iminoacetate + 1-deoxy-D-xylulose 5-phosphate = [ThiS sulfur-carrier protein]-C-terminal Gly-Gly + 2-[(2R,5Z)-2-carboxy-4-methylthiazol-5(2H)-ylidene]ethyl phosphate + 2 H2O + H(+). It participates in cofactor biosynthesis; thiamine diphosphate biosynthesis. Catalyzes the rearrangement of 1-deoxy-D-xylulose 5-phosphate (DXP) to produce the thiazole phosphate moiety of thiamine. Sulfur is provided by the thiocarboxylate moiety of the carrier protein ThiS. In vitro, sulfur can be provided by H(2)S. The polypeptide is Thiazole synthase (Agrobacterium fabrum (strain C58 / ATCC 33970) (Agrobacterium tumefaciens (strain C58))).